The following is a 135-amino-acid chain: Meiotically up-regulated gene 116 protein (135 aa).

A helical transmembrane segment spans residues 20–39; sequence YFHSFHCFFLLCFTVMLCVV. The interval 81–101 is disordered; sequence QTPTKKGNKTKKKRKKEKKKE. The span at 86–98 shows a compositional bias: basic residues; that stretch reads KGNKTKKKRKKEK.

The protein resides in the mitochondrion membrane. In terms of biological role, has a role in meiosis. This chain is Meiotically up-regulated gene 116 protein (mug116), found in Schizosaccharomyces pombe (strain 972 / ATCC 24843) (Fission yeast).